The chain runs to 507 residues: Maturase K (507 aa).

This sequence belongs to the intron maturase 2 family. MatK subfamily.

It localises to the plastid. The protein resides in the chloroplast. Usually encoded in the trnK tRNA gene intron. Probably assists in splicing its own and other chloroplast group II introns. The protein is Maturase K of Annona muricata (Soursop).